The sequence spans 192 residues: Mitochondrial import inner membrane translocase subunit TIM18 (192 aa).

A mitochondrion-targeting transit peptide spans methionine 1–leucine 42. Topologically, residues asparagine 43–threonine 88 are mitochondrial matrix. The helical transmembrane segment at leucine 89–leucine 109 threads the bilayer. Topologically, residues leucine 110–serine 113 are mitochondrial intermembrane. A helical transmembrane segment spans residues leucine 114 to isoleucine 134. The Mitochondrial matrix portion of the chain corresponds to proline 135 to lysine 144. Residues leucine 145–glutamate 165 form a helical membrane-spanning segment. The Mitochondrial intermembrane segment spans residues threonine 166–asparagine 192.

It belongs to the CybS family. In terms of assembly, component of the TIM22 complex, whose core is composed of TIM18, TIM22 and TIM54, associated with the peripheral proteins MRS5/TIM12 and the 70 kDa heterohexamer composed of TIM9 and TIM10 (or TIM8 and TIM13).

The protein resides in the mitochondrion inner membrane. In terms of biological role, component of the TIM22 complex, a complex that mediates the import and insertion of multi-pass transmembrane proteins into the mitochondrial inner membrane. The TIM22 complex forms a twin-pore translocase that uses the membrane potential as external driving force. Its role in the complex is unclear but it may be involved in the assembly and stabilization of the TIM22 complex. This chain is Mitochondrial import inner membrane translocase subunit TIM18 (TIM18), found in Saccharomyces cerevisiae (strain ATCC 204508 / S288c) (Baker's yeast).